A 177-amino-acid polypeptide reads, in one-letter code: Large ribosomal subunit protein uL6 (177 aa).

It belongs to the universal ribosomal protein uL6 family. In terms of assembly, part of the 50S ribosomal subunit.

Functionally, this protein binds to the 23S rRNA, and is important in its secondary structure. It is located near the subunit interface in the base of the L7/L12 stalk, and near the tRNA binding site of the peptidyltransferase center. The chain is Large ribosomal subunit protein uL6 from Bradyrhizobium diazoefficiens (strain JCM 10833 / BCRC 13528 / IAM 13628 / NBRC 14792 / USDA 110).